The primary structure comprises 372 residues: Ciliary neurotrophic factor receptor subunit alpha (372 aa).

The N-terminal stretch at 1–22 (MAASVPWACCAVLAAAAAAVYT) is a signal peptide. In terms of domain architecture, Ig-like C2-type spans 27 to 104 (PQEAPHVQYE…WHLRHQVLLH (78 aa)). C46 and C89 are disulfide-bonded. Residues N60, N70, N142, and N190 are each glycosylated (N-linked (GlcNAc...) asparagine). Fibronectin type-III domains follow at residues 108 to 205 (PPRE…VKPD) and 206 to 306 (PPEN…TEEP). Positions 290-294 (WSDWS) match the WSXWS motif motif. The segment at 301-338 (PWTEEPRHLTTEAQAPETTTSTTSSLAPPPTTKICDPG) is disordered. Over residues 311 to 326 (TEAQAPETTTSTTSSL) the composition is skewed to low complexity. S342 carries GPI-anchor amidated serine lipidation. Positions 343–372 (GGGPSILFLTSVPVTLVLAAAAATANNLLI) are cleaved as a propeptide — removed in mature form.

This sequence belongs to the type I cytokine receptor family. Type 3 subfamily. Forms a heterotrimer with LIFR and IL6ST. Interacts with heterodimeric neurotropic cytokine composed of CLCF1/CLC and CRLF1/CLF-1. Either alone or in complex with the heterodimer CLCF1-CRLF1 interacts with SORL1; this interaction may promote internalization and lysosomal degradation.

The protein localises to the cell membrane. Binds to CNTF. The alpha subunit provides the receptor specificity. The chain is Ciliary neurotrophic factor receptor subunit alpha (Cntfr) from Mus musculus (Mouse).